Reading from the N-terminus, the 685-residue chain is Mannan-binding lectin serine protease 2 (685 aa).

The first 19 residues, 1 to 19 (MRLLIVLGLLWSLVATLLG), serve as a signal peptide directing secretion. One can recognise a CUB 1 domain in the interval 20–137 (SKWPEPVFGR…TGFEAFYAAE (118 aa)). Ca(2+)-binding residues include E67 and D75. C72 and C90 are oxidised to a cystine. N103 is a glycosylation site (N-linked (GlcNAc...) asparagine). Ca(2+) contacts are provided by D120, S122, N123, D138, and V139. In terms of domain architecture, EGF-like; calcium-binding spans 138-181 (DVDECRTSLGDSVPCDHYCHNYLGGYYCSCRVGYILHQNKHTCS). 4 cysteine pairs are disulfide-bonded: C152–C165, C167–C180, C184–C211, and C241–C259. (3R)-3-hydroxyasparagine is present on N158. Ca(2+) is bound by residues Y159 and G162. The region spanning 184–296 (CSGQVFTGRS…TGWKIHYTST (113 aa)) is the CUB 2 domain. N-linked (GlcNAc...) asparagine glycosylation occurs at N285. Sushi domains lie at 298 to 363 (QPCP…ECSI) and 364 to 431 (IDCG…VCKP). Cystine bridges form between C300–C348, C328–C361, C366–C411, C396–C429, C433–C551, C597–C617, and C628–C659. The 240-residue stretch at 444 to 683 (IIGGQPAKPG…YIPWIENIIN (240 aa)) folds into the Peptidase S1 domain. Catalysis depends on charge relay system residues H482 and D531. The active-site Charge relay system is S632. N641 carries N-linked (GlcNAc...) asparagine glycosylation.

It belongs to the peptidase S1 family. In terms of assembly, homodimer; disulfide-linked. Binds MBL2. Isoform 2 binds to MASP1. Binds SERPING1. Post-translationally, N-glycosylated. In terms of processing, the iron and 2-oxoglutarate dependent 3-hydroxylation of aspartate and asparagine is (R) stereospecific within EGF domains. As to expression, highly expressed in liver. Secreted in plasma.

It is found in the secreted. It catalyses the reaction Selective cleavage after Arg-223 in complement component C2 (-Ser-Leu-Gly-Arg-|-Lys-Ile-Gln-Ile) and after Arg-76 in complement component C4 (-Gly-Leu-Gln-Arg-|-Ala-Leu-Glu-Ile).. In terms of biological role, serum protease that plays an important role in the activation of the complement system via mannose-binding lectin. After activation by auto-catalytic cleavage it cleaves C2 and C4, leading to their activation and to the formation of C3 convertase. In Rattus norvegicus (Rat), this protein is Mannan-binding lectin serine protease 2 (Masp2).